The primary structure comprises 562 residues: ATP synthase subunit beta, mitochondrial (562 aa).

2 stretches are compositionally biased toward low complexity: residues 1 to 13 and 20 to 40; these read MASRRLLSSLLRS and SKSPISNINPKLSSSSPSSKS. 2 disordered regions span residues 1–43 and 58–83; these read MASR…SRAS and SAAAAAPPQPPPAKPEGGKGGGKITD. The transit peptide at 1 to 55 directs the protein to the mitochondrion; sequence MASRRLLSSLLRSSSRRSVSKSPISNINPKLSSSSPSSKSRASPYGYLLTRAAEY. Residue 237–244 participates in ATP binding; sequence GGAGVGKT.

It belongs to the ATPase alpha/beta chains family. In terms of assembly, F-type ATPases have 2 components, CF(1) - the catalytic core - and CF(0) - the membrane proton channel. CF(1) has five subunits: alpha(3), beta(3), gamma(1), delta(1), epsilon(1). CF(0) has three main subunits: a, b and c.

It localises to the mitochondrion. The protein resides in the mitochondrion inner membrane. It catalyses the reaction ATP + H2O + 4 H(+)(in) = ADP + phosphate + 5 H(+)(out). In terms of biological role, mitochondrial membrane ATP synthase (F(1)F(0) ATP synthase or Complex V) produces ATP from ADP in the presence of a proton gradient across the membrane which is generated by electron transport complexes of the respiratory chain. F-type ATPases consist of two structural domains, F(1) - containing the extramembraneous catalytic core, and F(0) - containing the membrane proton channel, linked together by a central stalk and a peripheral stalk. During catalysis, ATP synthesis in the catalytic domain of F(1) is coupled via a rotary mechanism of the central stalk subunits to proton translocation. Subunits alpha and beta form the catalytic core in F(1). Rotation of the central stalk against the surrounding alpha(3)beta(3) subunits leads to hydrolysis of ATP in three separate catalytic sites on the beta subunits. The chain is ATP synthase subunit beta, mitochondrial (ATPB) from Hevea brasiliensis (Para rubber tree).